The primary structure comprises 394 residues: Na(+)/H(+) antiporter NhaA (394 aa).

The next 11 membrane-spanning stretches (helical) occupy residues 24–44 (AGLV…SPLA), 58–78 (LSVQ…LVGL), 96–116 (TLPG…YVML), 126–146 (GWAI…SLLG), 155–175 (IFLA…IAIF), 180–200 (INVA…SLCA), 214–234 (AVLW…GVLL), 267–287 (VAFA…FASI), 300–320 (VAAG…ALMV), 336–356 (VLGV…IGLL), and 370–390 (GILA…RIAG).

The protein belongs to the NhaA Na(+)/H(+) (TC 2.A.33) antiporter family.

It is found in the cell inner membrane. It catalyses the reaction Na(+)(in) + 2 H(+)(out) = Na(+)(out) + 2 H(+)(in). Na(+)/H(+) antiporter that extrudes sodium in exchange for external protons. The sequence is that of Na(+)/H(+) antiporter NhaA from Azorhizobium caulinodans (strain ATCC 43989 / DSM 5975 / JCM 20966 / LMG 6465 / NBRC 14845 / NCIMB 13405 / ORS 571).